The chain runs to 166 residues: Large ribosomal subunit protein uL10 (166 aa).

Belongs to the universal ribosomal protein uL10 family. Part of the ribosomal stalk of the 50S ribosomal subunit. The N-terminus interacts with L11 and the large rRNA to form the base of the stalk. The C-terminus forms an elongated spine to which L12 dimers bind in a sequential fashion forming a multimeric L10(L12)X complex.

In terms of biological role, forms part of the ribosomal stalk, playing a central role in the interaction of the ribosome with GTP-bound translation factors. This is Large ribosomal subunit protein uL10 from Listeria innocua serovar 6a (strain ATCC BAA-680 / CLIP 11262).